We begin with the raw amino-acid sequence, 351 residues long: Protein RecA (351 aa).

Residue 64–71 coordinates ATP; that stretch reads GPESSGKT. The tract at residues 330–351 is disordered; sequence DRFLQNGGPDPDDGDGDATAEM. Acidic residues predominate over residues 339-351; it reads DPDDGDGDATAEM.

Belongs to the RecA family.

The protein resides in the cytoplasm. Can catalyze the hydrolysis of ATP in the presence of single-stranded DNA, the ATP-dependent uptake of single-stranded DNA by duplex DNA, and the ATP-dependent hybridization of homologous single-stranded DNAs. It interacts with LexA causing its activation and leading to its autocatalytic cleavage. The polypeptide is Protein RecA (Rhizobium leguminosarum bv. viciae).